We begin with the raw amino-acid sequence, 343 residues long: Dihydroorotase (343 aa).

Zn(2+) is bound by residues H13 and H15. Substrate is bound by residues 15-17 and N41; that span reads HLR. Residues K99, H136, and H174 each contribute to the Zn(2+) site. K99 bears the N6-carboxylysine mark. Residue H136 participates in substrate binding. L219 lines the substrate pocket. A Zn(2+)-binding site is contributed by D247. Residue D247 is part of the active site. Substrate-binding residues include H251 and A263.

This sequence belongs to the metallo-dependent hydrolases superfamily. DHOase family. Class II DHOase subfamily. In terms of assembly, homodimer. Zn(2+) is required as a cofactor.

The enzyme catalyses (S)-dihydroorotate + H2O = N-carbamoyl-L-aspartate + H(+). It participates in pyrimidine metabolism; UMP biosynthesis via de novo pathway; (S)-dihydroorotate from bicarbonate: step 3/3. In terms of biological role, catalyzes the reversible cyclization of carbamoyl aspartate to dihydroorotate. This chain is Dihydroorotase, found in Alkalilimnicola ehrlichii (strain ATCC BAA-1101 / DSM 17681 / MLHE-1).